Consider the following 96-residue polypeptide: Protein transport protein Sec61 subunit beta (96 aa).

The span at 1-17 shows a compositional bias: polar residues; it reads MPGPTPSGTNVGSSGRS. The disordered stretch occupies residues 1-54; the sequence is MPGPTPSGTNVGSSGRSPSKAVAARAAGSTVRQRKNASCGTRSAGRTTSAGTGG. The residue at position 2 (Pro-2) is an N-acetylproline. Residues 2-71 are Cytoplasmic-facing; it reads PGPTPSGTNV…DSPGLKVGPV (70 aa). The residue at position 7 (Ser-7) is a Phosphoserine. Thr-9 carries the phosphothreonine modification. 3 positions are modified to phosphoserine: Ser-13, Ser-14, and Ser-17. Cys-39 carries S-palmitoyl cysteine lipidation. A compositionally biased stretch (low complexity) spans 40–50; it reads GTRSAGRTTSA. The helical transmembrane segment at 72 to 91 threads the bilayer; the sequence is PVLVMSLLFIASVFMLHIWG. The Lumenal segment spans residues 92–96; the sequence is KYTRS.

This sequence belongs to the SEC61-beta family. The SEC61 channel-forming translocon complex consists of channel-forming core components SEC61A1, SEC61B and SEC61G and different auxiliary components such as SEC62 and SEC63. The SEC61 channel associates with the multi-pass translocon (MPT) complex. Interacts with TRAM1.

Its subcellular location is the endoplasmic reticulum membrane. Component of SEC61 channel-forming translocon complex that mediates transport of signal peptide-containing precursor polypeptides across the endoplasmic reticulum (ER). Forms a ribosome receptor and a gated pore in the ER membrane, both functions required for cotranslational translocation of nascent polypeptides. The SEC61 channel is also involved in ER membrane insertion of transmembrane proteins: it mediates membrane insertion of the first few transmembrane segments of proteins, while insertion of subsequent transmembrane regions of multi-pass membrane proteins is mediated by the multi-pass translocon (MPT) complex. The SEC61 channel cooperates with the translocating protein TRAM1 to import nascent proteins into the ER. In Canis lupus familiaris (Dog), this protein is Protein transport protein Sec61 subunit beta (SEC61B).